Consider the following 233-residue polypeptide: 5'-methylthioadenosine/S-adenosylhomocysteine nucleosidase (233 aa).

Glu12 acts as the Proton acceptor in catalysis. Substrate contacts are provided by residues Gly78, Ile156, and 177–178 (ME). Asp201 serves as the catalytic Proton donor.

The protein belongs to the PNP/UDP phosphorylase family. MtnN subfamily.

It catalyses the reaction S-adenosyl-L-homocysteine + H2O = S-(5-deoxy-D-ribos-5-yl)-L-homocysteine + adenine. It carries out the reaction S-methyl-5'-thioadenosine + H2O = 5-(methylsulfanyl)-D-ribose + adenine. The catalysed reaction is 5'-deoxyadenosine + H2O = 5-deoxy-D-ribose + adenine. Its pathway is amino-acid biosynthesis; L-methionine biosynthesis via salvage pathway; S-methyl-5-thio-alpha-D-ribose 1-phosphate from S-methyl-5'-thioadenosine (hydrolase route): step 1/2. Its function is as follows. Catalyzes the irreversible cleavage of the glycosidic bond in both 5'-methylthioadenosine (MTA) and S-adenosylhomocysteine (SAH/AdoHcy) to adenine and the corresponding thioribose, 5'-methylthioribose and S-ribosylhomocysteine, respectively. Also cleaves 5'-deoxyadenosine, a toxic by-product of radical S-adenosylmethionine (SAM) enzymes, into 5-deoxyribose and adenine. The chain is 5'-methylthioadenosine/S-adenosylhomocysteine nucleosidase from Listeria welshimeri serovar 6b (strain ATCC 35897 / DSM 20650 / CCUG 15529 / CIP 8149 / NCTC 11857 / SLCC 5334 / V8).